Reading from the N-terminus, the 428-residue chain is 3-oxo-tetronate kinase (428 aa).

ATP contacts are provided by residues serine 267, 365-368, and glycine 409; that span reads GGET.

The protein belongs to the four-carbon acid sugar kinase family.

The catalysed reaction is 3-dehydro-L-erythronate + ATP = 3-dehydro-4-O-phospho-L-erythronate + ADP + H(+). It carries out the reaction 3-dehydro-D-erythronate + ATP = 3-dehydro-4-O-phospho-D-erythronate + ADP + H(+). In terms of biological role, catalyzes the ATP-dependent phosphorylation of 3-oxo-tetronate to 3-oxo-tetronate 4-phosphate. The protein is 3-oxo-tetronate kinase of Burkholderia multivorans (strain ATCC 17616 / 249).